The following is a 91-amino-acid chain: DNA/RNA-binding protein Alba (91 aa).

The residue at position 11 (lysine 11) is an N6-acetyllysine.

The protein belongs to the histone-like Alba family. In terms of processing, acetylated. Acetylation at Lys-11 decreases DNA-binding affinity.

The protein resides in the cytoplasm. It is found in the chromosome. Its function is as follows. Binds double-stranded DNA tightly but without sequence specificity. Incubation with DNA in vitro gives fibrous structures 10.3 +/- 1.1 nm in thickness (naked DNA is 1.83 +/- 0.37 nm). This protein does not significantly compact DNA. The protein is DNA/RNA-binding protein Alba of Thermococcus kodakarensis (strain ATCC BAA-918 / JCM 12380 / KOD1) (Pyrococcus kodakaraensis (strain KOD1)).